The chain runs to 657 residues: Methionine--tRNA ligase (657 aa).

The short motif at tyrosine 13–histidine 23 is the 'HIGH' region element. Positions lysine 308 to serine 312 match the 'KMSKS' region motif. Lysine 311 is a binding site for ATP. A tRNA-binding domain is found at aspartate 557 to lysine 657.

Belongs to the class-I aminoacyl-tRNA synthetase family. MetG type 2B subfamily. Homodimer.

The protein resides in the cytoplasm. It catalyses the reaction tRNA(Met) + L-methionine + ATP = L-methionyl-tRNA(Met) + AMP + diphosphate. Is required not only for elongation of protein synthesis but also for the initiation of all mRNA translation through initiator tRNA(fMet) aminoacylation. The polypeptide is Methionine--tRNA ligase (Staphylococcus aureus (strain MRSA252)).